The following is an 86-amino-acid chain: Small ribosomal subunit protein bS20 (86 aa).

This sequence belongs to the bacterial ribosomal protein bS20 family.

Functionally, binds directly to 16S ribosomal RNA. This is Small ribosomal subunit protein bS20 from Mycolicibacterium vanbaalenii (strain DSM 7251 / JCM 13017 / BCRC 16820 / KCTC 9966 / NRRL B-24157 / PYR-1) (Mycobacterium vanbaalenii).